A 774-amino-acid chain; its full sequence is Transmembrane GTPase fzo-1 (774 aa).

Residues 1–29 (MSGTASLVHTLPASGDSNHRGLHSLKNSR) are disordered. Topologically, residues 1–617 (MSGTASLVHT…EEQAMMTQMV (617 aa)) are cytoplasmic. A compositionally biased stretch (basic residues) spans 20–29 (RGLHSLKNSR). Residues 51 to 71 (YGELKDNVAELEGVYKDIKEN) adopt a coiled-coil conformation. One can recognise a Dynamin-type G domain in the interval 97–352 (QRDNMKVVFF…TRALEFQNFE (256 aa)). The interval 107–114 (GRTSNGKS) is G1 motif. 110 to 115 (SNGKST) provides a ligand contact to GTP. A G2 motif region spans residues 133–134 (TT). The G3 motif stretch occupies residues 211–214 (DSPG). Residue 270–273 (NRWD) coordinates GTP. A G4 motif region spans residues 270–273 (NRWD). Glu300 is a region of interest (G5 motif). Ser317 is a binding site for GTP. Residues 385–415 (NLNSVLTSAAEQRSKLQNNLNESTRTFNECR) adopt a coiled-coil conformation. A helical transmembrane segment spans residues 618 to 638 (LTSAAFLANGSLGVLVVGGIV). Residues 639–640 (YK) are Mitochondrial intermembrane-facing. A helical membrane pass occupies residues 641 to 661 (AVGWRVIAVGGAAYAGLYAWE). The Cytoplasmic portion of the chain corresponds to 662 to 774 (RMRWNSGAKE…YLRSDSPPTP (113 aa)).

This sequence belongs to the TRAFAC class dynamin-like GTPase superfamily. Dynamin/Fzo/YdjA family. Mitofusin subfamily. As to quaternary structure, interacts with ced-9; interaction may be suppressed by interaction of ced-9 with egl-1.

Its subcellular location is the mitochondrion outer membrane. The enzyme catalyses GTP + H2O = GDP + phosphate + H(+). Its function is as follows. Probable transmembrane GTPase. Mediates mitochondrial fusion. Fusion of mitochondria occurs in many cell types and constitutes an important step in mitochondria morphology, which is balanced between fusion and fission. Dispensable for normal apoptotic processes during embryonic development. The polypeptide is Transmembrane GTPase fzo-1 (Caenorhabditis elegans).